Here is a 414-residue protein sequence, read N- to C-terminus: 3-aminobutyryl-CoA aminotransferase (414 aa).

The residue at position 261 (K261) is an N6-(pyridoxal phosphate)lysine.

The protein belongs to the class-III pyridoxal-phosphate-dependent aminotransferase family. Homodimer. It depends on pyridoxal 5'-phosphate as a cofactor.

The enzyme catalyses (3S)-3-aminobutanoyl-CoA + 2-oxoglutarate = acetoacetyl-CoA + L-glutamate. The protein operates within amino-acid degradation; L-lysine degradation via acetate pathway. 3-aminobutyryl-CoA aminotransferase that acts specifically on coenzyme A (CoA) esters and catalyzes the conversion of 3-aminobutyryl-CoA into acetoacetyl-CoA in an alternative pathway of lysine fermentation. The polypeptide is 3-aminobutyryl-CoA aminotransferase (kat) (Cloacimonas acidaminovorans (strain Evry)).